Here is a 678-residue protein sequence, read N- to C-terminus: Inositol-trisphosphate 3-kinase C (678 aa).

2 disordered regions span residues 26-128 and 151-300; these read LEAL…RRNS and DLQS…LDLS. Over residues 44–58 the composition is skewed to gly residues; that stretch reads PGAGGPTGRPEGGGP. Composition is skewed to basic and acidic residues over residues 61–76 and 107–116; these read WIEE…RTDL and EKPRQNKELD. At Ser-160 the chain carries Phosphoserine. Basic and acidic residues-rich tracts occupy residues 173–196 and 220–236; these read ELDR…DNLR and SGKE…HDTD. The short motif at 318-326 is the Nuclear export signal element; that stretch reads LCPVPRLII. The interval 328-380 is disordered; it reads PETPEPEAQPVGPQSRIEGGTGGFSSASSFDESEDDLVAGGGGTSDPEDRAGS. The residue at position 330 (Thr-330) is a Phosphothreonine. Ser-398 bears the Phosphoserine mark. Residues Lys-426, 466 to 468, and Asp-479 contribute to the ATP site; that span reads EDL. Substrate-binding positions include Lys-481, 502–508, and 529–536; these read RKDMYEK and KPRYMQWR. Residues 504–512 form a calmodulin-binding region; it reads DMYEKMVAV. Residues Lys-553 and Asp-633 each coordinate ATP. Residue Lys-636 participates in substrate binding.

The protein belongs to the inositol phosphokinase (IPK) family.

Its subcellular location is the nucleus. It localises to the cytoplasm. The catalysed reaction is 1D-myo-inositol 1,4,5-trisphosphate + ATP = 1D-myo-inositol 1,3,4,5-tetrakisphosphate + ADP + H(+). With respect to regulation, activated by calcium/calmodulin. Inhibited by high concentrations of the substrate Ins(1,2,4)P3, and allosterically activated by the product Ins(1,3,4,5)P4. Functionally, catalyzes the phosphorylation of 1D-myo-inositol 1,4,5-trisphosphate (InsP3) into 1D-myo-inositol 1,3,4,5-tetrakisphosphate and participates to the regulation of calcium homeostasis. Can phosphorylate inositol 2,4,5-triphosphate to inositol 2,4,5,6-tetraphosphate. In Mus musculus (Mouse), this protein is Inositol-trisphosphate 3-kinase C (Itpkc).